We begin with the raw amino-acid sequence, 585 residues long: ATP-dependent lipid A-core flippase (585 aa).

6 helical membrane passes run 23–43 (LAFG…AYVI), 64–84 (IAAY…FMGT), 140–160 (AFLT…WMFY), 163–183 (WQLS…VSVV), 247–267 (ILSV…VLYI), and 273–293 (FITD…TMLL). An ABC transmembrane type-1 domain is found at 27–308 (VAIIGMVGYS…LTTVNSEFQK (282 aa)). One can recognise an ABC transporter domain in the interval 340–576 (LEFRDVTFHY…DGAYAQLHKL (237 aa)). 374–381 (GRSGSGKS) serves as a coordination point for ATP.

This sequence belongs to the ABC transporter superfamily. Lipid exporter (TC 3.A.1.106) family. Homodimer.

The protein resides in the cell inner membrane. It carries out the reaction ATP + H2O + lipid A-core oligosaccharideSide 1 = ADP + phosphate + lipid A-core oligosaccharideSide 2.. Functionally, involved in lipopolysaccharide (LPS) biosynthesis. Translocates lipid A-core from the inner to the outer leaflet of the inner membrane. Transmembrane domains (TMD) form a pore in the inner membrane and the ATP-binding domain (NBD) is responsible for energy generation. The protein is ATP-dependent lipid A-core flippase of Pseudoalteromonas atlantica (strain T6c / ATCC BAA-1087).